Reading from the N-terminus, the 156-residue chain is MTEKRLAQISVVLSTIIIMTYAFLSSYFLNKPLNLSSADLMYFALSNLLSLSLPFVCAWFPYLFVRPAAVTGSALSAFGLFLFFAITSSTMDDPKGAAAIWVIYFFWLIGAALAGVYPALFKPHFFTKTATRALVLSALFTVVVSFIIGFLISRIA.

5 helical membrane-spanning segments follow: residues 7 to 29 (AQIS…SYFL), 42 to 64 (YFAL…PYLF), 69 to 88 (AVTG…AITS), 98 to 120 (AAIW…YPAL), and 133 to 155 (ALVL…ISRI).

It is found in the cell membrane. This is an uncharacterized protein from Pasteurella multocida (strain Pm70).